The chain runs to 358 residues: Alpha-ketoglutarate-dependent L-arginine hydroxylase (358 aa).

Positions 1–21 (MTESPTTHHGAAPPDSVATPV) are disordered. Residues 117 to 135 (LSFLLMLYAGLLGDVFGWA) form a helical membrane-spanning segment. 156–158 (LVS) serves as a coordination point for L-arginine. Fe cation-binding residues include H168 and E170. T194 provides a ligand contact to 2-oxoglutarate. Residue 268-270 (DGD) coordinates L-arginine. A Fe cation-binding site is contributed by H316. Residues R330 and R334 each contribute to the 2-oxoglutarate site. Residue R334 coordinates L-arginine.

Belongs to the clavaminate synthase family. Fe cation is required as a cofactor.

The protein localises to the membrane. It carries out the reaction L-arginine + 2-oxoglutarate + O2 = (2S,3S)-hydroxyarginine + succinate + CO2. It participates in antibiotic biosynthesis. Its function is as follows. Involved in the biosynthesis of capreomycidine, an unusual amino acid used by non-ribosomal peptide synthases (NRPS) to make the tuberactinomycin class of peptide antibiotics such as viomycin and capreomycin. Catalyzes the stereospecific hydroxylation of the C3 of (2S)-arginine to generate (3S)-hydroxy-(2S)-arginine. Usually clavaminic acid synthase-like oxygenases catalyze the formation of threo diastereomers, however VioC produces the erythro diastereomer of beta-carbon-hydroxylated L-arginine. It exerts a broad substrate specificity by accepting the analogs L-homoarginine and L-canavanine for the beta-carbon hydroxylation. In Streptomyces vinaceus, this protein is Alpha-ketoglutarate-dependent L-arginine hydroxylase (vioC).